The following is a 424-amino-acid chain: Tyrosine--tRNA ligase (424 aa).

Tyrosine 37 contributes to the L-tyrosine binding site. The short motif at 42-51 (PTADSLHLGH) is the 'HIGH' region element. L-tyrosine contacts are provided by tyrosine 174 and glutamine 178. The 'KMSKS' region signature appears at 234 to 238 (KFGKT). Lysine 237 contributes to the ATP binding site. The S4 RNA-binding domain occupies 357 to 414 (TGLIDALVASGLAKSKSEARTFIQSGSVAINGNKAEALDHAIGGDELLYGRFTILRRG).

It belongs to the class-I aminoacyl-tRNA synthetase family. TyrS type 1 subfamily. Homodimer.

Its subcellular location is the cytoplasm. It catalyses the reaction tRNA(Tyr) + L-tyrosine + ATP = L-tyrosyl-tRNA(Tyr) + AMP + diphosphate + H(+). Functionally, catalyzes the attachment of tyrosine to tRNA(Tyr) in a two-step reaction: tyrosine is first activated by ATP to form Tyr-AMP and then transferred to the acceptor end of tRNA(Tyr). This Dechloromonas aromatica (strain RCB) protein is Tyrosine--tRNA ligase.